We begin with the raw amino-acid sequence, 248 residues long: Functional amyloid sbunit FapE (248 aa).

The first 20 residues, M1–A20, serve as a signal peptide directing secretion.

The protein belongs to the FapE family. As to quaternary structure, a minor component of purified amyloid fibrils. Fibrils are resistant to boiling in 2% (weight/vol) SDS and require &gt;90% (vol/vol) formic acid to dissolve.

The protein resides in the fimbrium. It localises to the secreted. A minor component of the functional amyloid in this bacterium. Upon overexpression of the endogenous six-gene locus (fapA-fapF) in situ, cells form large clumps during liquid growth, make large amounts of biofilm and produce amyloid fibrils. Expression of the 6 gene operon in E.coli strain BL21(DE3) induces flocculation and biofilm formation with copious extracellular fibrils. This is Functional amyloid sbunit FapE from Pseudomonas fluorescens.